A 64-amino-acid chain; its full sequence is Large ribosomal subunit protein bL35 (64 aa).

The protein belongs to the bacterial ribosomal protein bL35 family.

The sequence is that of Large ribosomal subunit protein bL35 from Helicobacter hepaticus (strain ATCC 51449 / 3B1).